The chain runs to 572 residues: MLRNCLRKLGNHQTKCSVKTLHTPIYRTKNLQVLRDTLSGIKLLEKIITSSSYNKTLIYEPKYKSKPQVVSSHDTMRLHNVMRELLDSLQVDEATNTRLQSNRPRKLGRVGLQLFMDCIQDNLTATSTSLTCSLLEHYFKYPEKEVTNGIKAGLRYIRDFLAKNKIIVKSQNDVDALVEQLTMSSSDSQSIKRVLKAINYELFSDDIVRVINGNKTYDEVDVSKGWKYPAGILDSNEAYLRSLELPTKKLVSIDKDMLVLMYDGTLRDANKILPTITYARKLRKSILLIVNGDCTGDALTSVTINNNRNKRENNESRIVVLKYSKKANNDLAPQENLDFIKFLRLPCGYDSIYSPEYSPLVPSKMCADKYYGSIESIKATTGEAFLYNSIDAEAIPNKVPKSFLQNTVTLSIGGHNEIEIDRRRNAIDNCLNNVLCHGLAKGFIPGYGISLLKAIPGLNELKANEPNFMTKVGINAVLSAVILPSEVAFKNAYGYNYYEINSLIAGAINEKSFPMAKFSPNSEPVNTVKDGNLEPWSKMDSCLAGVETFIELLTSCNTIITCVYKKPERHKA.

The transit peptide at 1 to 16 directs the protein to the mitochondrion; sequence MLRNCLRKLGNHQTKC. At 17 to 471 the chain is on the mitochondrial matrix side; it reads SVKTLHTPIY…KANEPNFMTK (455 aa). The chain crosses the membrane as a helical span at residues 472-488; the sequence is VGINAVLSAVILPSEVA. Residues 489-572 lie on the Mitochondrial intermembrane side of the membrane; the sequence is FKNAYGYNYY…VYKKPERHKA (84 aa).

Belongs to the chaperonin (HSP60) family. As to quaternary structure, forms a high molecular mass protein complex of approximately 850 kDa.

Its subcellular location is the mitochondrion inner membrane. In terms of biological role, chaperone. Required for the assembly of succinate dehydrogenase subunits. Ensures mitochondrial gene expression at elevated temperatures and prevents heat-aggregation of the ribosomal subunit VAR1. The sequence is that of Mitochondrial chaperone TCM62 (TCM62) from Saccharomyces cerevisiae (strain YJM789) (Baker's yeast).